Here is a 238-residue protein sequence, read N- to C-terminus: Ribonuclease PH (238 aa).

Phosphate contacts are provided by residues arginine 86 and 124-126; that span reads GTR.

The protein belongs to the RNase PH family. Homohexameric ring arranged as a trimer of dimers.

It carries out the reaction tRNA(n+1) + phosphate = tRNA(n) + a ribonucleoside 5'-diphosphate. Phosphorolytic 3'-5' exoribonuclease that plays an important role in tRNA 3'-end maturation. Removes nucleotide residues following the 3'-CCA terminus of tRNAs; can also add nucleotides to the ends of RNA molecules by using nucleoside diphosphates as substrates, but this may not be physiologically important. Probably plays a role in initiation of 16S rRNA degradation (leading to ribosome degradation) during starvation. This chain is Ribonuclease PH, found in Geotalea daltonii (strain DSM 22248 / JCM 15807 / FRC-32) (Geobacter daltonii).